A 351-amino-acid chain; its full sequence is THO complex subunit 3 (351 aa).

Residues 1-20 (MAVPAAAMGPSALGQSGPGS) form a disordered region. An N-acetylalanine modification is found at alanine 2. 6 WD repeats span residues 53 to 94 (AHSA…KENN), 97 to 137 (GHGD…CIAT), 139 to 178 (NTKG…SKAE), 180 to 221 (QFKF…QSIN), 222 to 261 (AHPS…CVRC), and 264 to 303 (RLDW…KLWE).

Belongs to the THOC3 family. As to quaternary structure, component of the THO subcomplex, which is composed of THOC1, THOC2, THOC3, THOC5, THOC6 and THOC7. The THO subcomplex interacts with DDX39B to form the THO-DDX39B complex which multimerizes into a 28-subunit tetrameric assembly. Component of the transcription/export (TREX) complex at least composed of ALYREF/THOC4, DDX39B, SARNP/CIP29, CHTOP and the THO subcomplex; in the complex interacts with THOC2. TREX seems to have a dynamic structure involving ATP-dependent remodeling.

Its subcellular location is the nucleus. It is found in the nucleus speckle. Its function is as follows. Component of the THO subcomplex of the TREX complex which is thought to couple mRNA transcription, processing and nuclear export, and which specifically associates with spliced mRNA and not with unspliced pre-mRNA. Required for efficient export of polyadenylated RNA and spliced mRNA. The THOC1-THOC2-THOC3 core complex alone is sufficient to bind export factor NXF1-NXT1 and promote ATPase activity of DDX39B. TREX is recruited to spliced mRNAs by a transcription-independent mechanism, binds to mRNA upstream of the exon-junction complex (EJC) and is recruited in a splicing- and cap-dependent manner to a region near the 5' end of the mRNA where it functions in mRNA export to the cytoplasm via the TAP/NXF1 pathway. (Microbial infection) The TREX complex is essential for the export of Kaposi's sarcoma-associated herpesvirus (KSHV) intronless mRNAs and infectious virus production. This Homo sapiens (Human) protein is THO complex subunit 3 (THOC3).